A 201-amino-acid polypeptide reads, in one-letter code: 3-isopropylmalate dehydratase small subunit (201 aa).

The protein belongs to the LeuD family. LeuD type 1 subfamily. Heterodimer of LeuC and LeuD.

It catalyses the reaction (2R,3S)-3-isopropylmalate = (2S)-2-isopropylmalate. The protein operates within amino-acid biosynthesis; L-leucine biosynthesis; L-leucine from 3-methyl-2-oxobutanoate: step 2/4. Catalyzes the isomerization between 2-isopropylmalate and 3-isopropylmalate, via the formation of 2-isopropylmaleate. This is 3-isopropylmalate dehydratase small subunit from Erwinia tasmaniensis (strain DSM 17950 / CFBP 7177 / CIP 109463 / NCPPB 4357 / Et1/99).